Here is an 837-residue protein sequence, read N- to C-terminus: MKTKNFPLNKIAFACTLLLANPVAWAEDQFDASLWGGGSVLGIDFARFNVKNAVLPGRYEAQIYVNNEEKGESDIIFADNPATGRAELCFTPKLQEMLDLMDEAIVKSPNAEDDTCVFASEAIPKGTFDYQGGDMKLKLELPQALTIRRPRGYIAPSRWQTGTNAASANYDINYYRSGNPEVKSKSLYVGLRGGVNLGNWALRHNGSFSRFENHSSSGFTDKGKNHYERGDTYLQRDFALLRGNVTVGDFFSTARIGESFGLRGLRIASDDRMLAPSQRGFAPVVRGVANTNAKVSIKQNGYTIYQITVPAGPFVINDLYASGYSGDLTVEIQESDGKVRSFIVPFSNLAPLMRVGHLRYQLAGGRYRIDSRTFDERVLQGVLQYGLTNHLTLNSSLLYTRHYRAGLFGFGLNTPIGAFSADATWSHAEFPLKKVSKNGYSLHGSYSINFNEIGTNLTLAAYRYSSRDFYTLSDTIGLNRTFKQFSGAYLPEIYRPKNQFQVSLSQSLGNWGNLYLSGQTYNYWEKRGTNTQYQLAYANRFHILNYSINLSQSIDKETGKRDNSIYLSLSLPLGDNHSADSSYSRSGNDINQRLGVNGSFGERHQWSYGINASRNNQGYRSYDANLAHNNSIGSYRASYSRDSLKNRSTSLGASGAVVAHKYGITLSQPVGESFAIIHAKDAAGAKVESGANVSLDYFGNAVVPYTSPYEINYIGINPSDAEANVEFEATERQIIPRANSISLVDFRTGKNTMVLFNLTLPNGEPVPMASTAQDSEGAFVGDVVQGGVLFANKLTQPKGELIVKWGERESEQCRFHYQVDLDNAQIQNHDIQCKTAE.

A signal peptide spans 1 to 26; it reads MKTKNFPLNKIAFACTLLLANPVAWA. Cys813 and Cys833 are joined by a disulfide.

Belongs to the fimbrial export usher family.

Its subcellular location is the cell outer membrane. Essential for piliation. The sequence is that of Outer membrane usher protein HifC (hifC) from Haemophilus influenzae.